The primary structure comprises 1017 residues: Protein HIR2 (1017 aa).

WD repeat units lie at residues 10–49, 74–117, 124–163, 167–208, 228–271, 275–326, and 330–371; these read YHNG…ELSK, CHKS…QLFP, SEVN…FQEL, CHEK…DDTS, PLNV…TNIE, GHDF…PITV, and AVQG…YTFS. The interval 417-561 is disordered; sequence ISTTTSSSNT…APSDLPRSNS (145 aa). The span at 473 to 483 shows a compositional bias: acidic residues; it reads LDDDIDGDGDD. 2 stretches are compositionally biased toward polar residues: residues 518–535 and 545–561; these read SDST…VTTK and LISS…RSNS.

The protein belongs to the WD repeat HIR1 family.

The protein localises to the nucleus. Functionally, required for replication-independent chromatin assembly and for the periodic repression of histone gene transcription during the cell cycle. The chain is Protein HIR2 (HIR2) from Candida albicans (strain SC5314 / ATCC MYA-2876) (Yeast).